Consider the following 634-residue polypeptide: DNA gyrase subunit B (634 aa).

Positions 1 to 220 are ATPase domain; sequence MSYDASAIRV…EEVFLDKGGV (220 aa). The segment at 221-390 is transducer domain; it reads ASFAKALAEG…EAARKARELV (170 aa). The Toprim domain occupies 416–534; the sequence is AELFIVEGDS…RGHVYIAQPP (119 aa). Glutamate 422, aspartate 499, and aspartate 501 together coordinate Mg(2+).

This sequence belongs to the type II topoisomerase GyrB family. Heterotetramer, composed of two GyrA and two GyrB chains. Non-hydrolyzable ATP analogs induce dimerization, novobiocin also induces a small amount of dimerization. The two subunits form an intertwined dimer where the GyrB ATPase transducer helix of 1 subunit connects to the Toprim domain of the other GyrB subunit through a 10 residue linker. In the heterotetramer, GyrA contains the active site tyrosine that forms a covalent intermediate with the DNA, while GyrB binds cofactors and catalyzes ATP hydrolysis. Mg(2+) serves as cofactor. The cofactor is Mn(2+). Ca(2+) is required as a cofactor.

It is found in the cytoplasm. It carries out the reaction ATP-dependent breakage, passage and rejoining of double-stranded DNA.. Functionally, a type II topoisomerase that negatively supercoils closed circular double-stranded (ds) DNA in an ATP-dependent manner. It probably also catalyzes the interconversion of other topological isomers of double-stranded DNA rings, including catenanes. Relaxes negatively supercoiled DNA in an ATP-independent manner. At comparable concentrations T.thermophilus gyrase does not introduce as many negative supercoils into DNA as the E.coli enzyme. Its function is as follows. Negative supercoiling favors strand separation, and DNA replication, transcription, recombination and repair, all of which involve strand separation. Type II topoisomerases break and join 2 DNA strands simultaneously in an ATP-dependent manner. In Thermus thermophilus (strain ATCC 27634 / DSM 579 / HB8), this protein is DNA gyrase subunit B.